Here is a 63-residue protein sequence, read N- to C-terminus: EGSGGSGSSGNFTTGSNVRMSSVTNTSNAGTGTSGGGNSAAASGASVNAPPVTVTLTESLLNK.

Positions 1-63 (EGSGGSGSSG…VTLTESLLNK (63 aa)) are disordered. Composition is skewed to low complexity over residues 9 to 31 (SGNF…NAGT) and 39 to 49 (SAAASGASVNA). A compositionally biased stretch (polar residues) spans 54–63 (VTLTESLLNK).

As to quaternary structure, forms a heterodimer with timeless (TIM); the complex then translocates into the nucleus. Post-translationally, phosphorylated with a circadian rhythmicity, probably by the double-time protein (dbt). Phosphorylation could be implicated in the stability of per monomer and in the formation of heterodimer per-tim.

The protein localises to the nucleus. It is found in the cytoplasm. It localises to the perinuclear region. Its function is as follows. Essential for biological clock functions. Determines the period length of circadian and ultradian rhythms; an increase in PER dosage leads to shortened circadian rhythms and a decrease leads to lengthened circadian rhythms. Essential for the circadian rhythmicity of locomotor activity, eclosion behavior, and for the rhythmic component of the male courtship song that originates in the thoracic nervous system. The biological cycle depends on the rhythmic formation and nuclear localization of the TIM-PER complex. Light induces the degradation of TIM, which promotes elimination of PER. Nuclear activity of the heterodimer coordinatively regulates PER and TIM transcription through a negative feedback loop. Behaves as a negative element in circadian transcriptional loop. Does not appear to bind DNA, suggesting indirect transcriptional inhibition. The sequence is that of Period circadian protein (per) from Drosophila immigrans (Fruit fly).